A 144-amino-acid polypeptide reads, in one-letter code: Large ribosomal subunit protein uL15 (144 aa).

The interval 1-59 (MHLNTLAPAPGAKKSSKRVGRGMGSGLGKTGGRGHKGQKSRSGGSVKPGFEGGQMPIQR) is disordered. Residues 21–31 (RGMGSGLGKTG) are compositionally biased toward gly residues.

The protein belongs to the universal ribosomal protein uL15 family. Part of the 50S ribosomal subunit.

Binds to the 23S rRNA. The sequence is that of Large ribosomal subunit protein uL15 from Pseudoalteromonas atlantica (strain T6c / ATCC BAA-1087).